Consider the following 64-residue polypeptide: Large ribosomal subunit protein bL35 (64 aa).

This sequence belongs to the bacterial ribosomal protein bL35 family.

The polypeptide is Large ribosomal subunit protein bL35 (Pelodictyon phaeoclathratiforme (strain DSM 5477 / BU-1)).